A 152-amino-acid polypeptide reads, in one-letter code: Aspartate-rich protein (152 aa).

A signal peptide spans 1–19; it reads MQKLLLAVLFFSLLAVATA. Residues 82–113 show a composition bias toward basic and acidic residues; the sequence is ATPKTEAEPGSLDKGEGTKGEKGKEGKKEKGE. A disordered region spans residues 82-152; that stretch reads ATPKTEAEPG…VHENDDENED (71 aa). Residues 135–152 are compositionally biased toward acidic residues; sequence DDDDDRDDVHENDDENED.

As to expression, prismatic layer of shell (at protein level). Expressed primarily in the mantle with highest level in the mantle edge and lower level in the mantle pallium.

It localises to the secreted. The chain is Aspartate-rich protein from Margaritifera margaritifera (Freshwater pearl mussel).